Here is a 100-residue protein sequence, read N- to C-terminus: Probable antitoxin MazE1 (100 aa).

The disordered stretch occupies residues P77–Q100.

As to quaternary structure, forms a complex with cognate toxin MazF1.

In terms of biological role, probable antitoxin component of a type II toxin-antitoxin (TA) system. Labile antitoxin that binds to cognate MazF1 toxin and counteracts its endoribonuclease activity. The sequence is that of Probable antitoxin MazE1 (mazE1) from Mycobacterium bovis (strain ATCC BAA-935 / AF2122/97).